Reading from the N-terminus, the 268-residue chain is Putative hydro-lyase ABSDF2257 (268 aa).

The protein belongs to the D-glutamate cyclase family.

The polypeptide is Putative hydro-lyase ABSDF2257 (Acinetobacter baumannii (strain SDF)).